A 578-amino-acid polypeptide reads, in one-letter code: 2-succinyl-5-enolpyruvyl-6-hydroxy-3-cyclohexene-1-carboxylate synthase (578 aa).

It belongs to the TPP enzyme family. MenD subfamily. As to quaternary structure, homodimer. It depends on Mg(2+) as a cofactor. The cofactor is Mn(2+). Thiamine diphosphate serves as cofactor.

The enzyme catalyses isochorismate + 2-oxoglutarate + H(+) = 5-enolpyruvoyl-6-hydroxy-2-succinyl-cyclohex-3-ene-1-carboxylate + CO2. Its pathway is quinol/quinone metabolism; 1,4-dihydroxy-2-naphthoate biosynthesis; 1,4-dihydroxy-2-naphthoate from chorismate: step 2/7. The protein operates within quinol/quinone metabolism; menaquinone biosynthesis. Its function is as follows. Catalyzes the thiamine diphosphate-dependent decarboxylation of 2-oxoglutarate and the subsequent addition of the resulting succinic semialdehyde-thiamine pyrophosphate anion to isochorismate to yield 2-succinyl-5-enolpyruvyl-6-hydroxy-3-cyclohexene-1-carboxylate (SEPHCHC). The sequence is that of 2-succinyl-5-enolpyruvyl-6-hydroxy-3-cyclohexene-1-carboxylate synthase from Prosthecochloris aestuarii (strain DSM 271 / SK 413).